Reading from the N-terminus, the 691-residue chain is Elongation factor G (691 aa).

A tr-type G domain is found at glutamate 8–valine 282. Residues alanine 17–threonine 24, aspartate 81–histidine 85, and asparagine 135–aspartate 138 each bind GTP.

Belongs to the TRAFAC class translation factor GTPase superfamily. Classic translation factor GTPase family. EF-G/EF-2 subfamily.

The protein localises to the cytoplasm. Its function is as follows. Catalyzes the GTP-dependent ribosomal translocation step during translation elongation. During this step, the ribosome changes from the pre-translocational (PRE) to the post-translocational (POST) state as the newly formed A-site-bound peptidyl-tRNA and P-site-bound deacylated tRNA move to the P and E sites, respectively. Catalyzes the coordinated movement of the two tRNA molecules, the mRNA and conformational changes in the ribosome. This Prochlorococcus marinus (strain MIT 9312) protein is Elongation factor G.